A 207-amino-acid chain; its full sequence is Large ribosomal subunit protein uL4 (207 aa).

Residues 49 to 78 form a disordered region; that stretch reads HAVKNRSAVRGGGRKPWRQKGTGRARQGSI. Over residues 60-71 the composition is skewed to basic residues; it reads GGRKPWRQKGTG.

This sequence belongs to the universal ribosomal protein uL4 family. Part of the 50S ribosomal subunit.

Its function is as follows. One of the primary rRNA binding proteins, this protein initially binds near the 5'-end of the 23S rRNA. It is important during the early stages of 50S assembly. It makes multiple contacts with different domains of the 23S rRNA in the assembled 50S subunit and ribosome. In terms of biological role, forms part of the polypeptide exit tunnel. The chain is Large ribosomal subunit protein uL4 from Latilactobacillus sakei subsp. sakei (strain 23K) (Lactobacillus sakei subsp. sakei).